A 70-amino-acid chain; its full sequence is Putative membrane protein insertion efficiency factor (70 aa).

Belongs to the UPF0161 family.

It localises to the cell membrane. In terms of biological role, could be involved in insertion of integral membrane proteins into the membrane. This Symbiobacterium thermophilum (strain DSM 24528 / JCM 14929 / IAM 14863 / T) protein is Putative membrane protein insertion efficiency factor.